A 436-amino-acid chain; its full sequence is MQVSVESTSALERRMTVGVPVERIETEVNKRLQQTARRAKVPGFRPGKVPMSVIRQRYEDAARQEALGDLIQATFYEAVVEQKLNPAGAPAVEPKSFEKGKDLEYVATFEVFPEFEVTGFDSIAIERLQADVADSDVDNMLDILRKQNTRFEAVERAAENGDQLNIDFVGKIDGEAFAGGSAKGTQLVLGSGRMIPGFEDALVGVKAGEERVINPTFPEDYQNLDLAGKTAEFAVTVNSVSAPQLPELNDEFFALFGIKEGGLEGFRAEVRKNMERELRQAIKSKVKNQVMDGLLAANPVEVPKALIGNEVNRLRVQAVQQFGGNIKPDQLPAELFEEQAKRRVVLGLIVAEVVKQFDLKPDEARVRELIEEMASAYQEPEQVVAWYYKNDQQMNEVRSVVLEEQVVDTVLQKANVTDKAVSYEDAVKPAEAPKAD.

The PPIase FKBP-type domain maps to 161–246 (GDQLNIDFVG…VNSVSAPQLP (86 aa)).

The protein belongs to the FKBP-type PPIase family. Tig subfamily.

The protein resides in the cytoplasm. The enzyme catalyses [protein]-peptidylproline (omega=180) = [protein]-peptidylproline (omega=0). Its function is as follows. Involved in protein export. Acts as a chaperone by maintaining the newly synthesized protein in an open conformation. Functions as a peptidyl-prolyl cis-trans isomerase. In Ectopseudomonas mendocina (strain ymp) (Pseudomonas mendocina), this protein is Trigger factor.